We begin with the raw amino-acid sequence, 1250 residues long: SRC kinase signaling inhibitor 1 (1250 aa).

Residues 19–45 (AEGRARSPREEVGPRDPGGRGEPDPER) are compositionally biased toward basic and acidic residues. The tract at residues 19–78 (AEGRARSPREEVGPRDPGGRGEPDPERSSPPMLSADDAEYPREYRTLGGGGGGGSGGRRF) is disordered. 2 positions are modified to phosphoserine: serine 47 and serine 52. The segment covering 65 to 75 (LGGGGGGGSGG) has biased composition (gly residues). Serine 79 is subject to Phosphoserine. Threonine 86 is modified (phosphothreonine). A phosphoserine mark is found at serine 87, serine 98, serine 211, serine 233, serine 237, serine 247, and serine 293. At tyrosine 309 the chain carries Phosphotyrosine. The disordered stretch occupies residues 352–448 (ASRESSPTRR…RRDVKPDEDL (97 aa)). A compositionally biased stretch (polar residues) spans 354 to 364 (RESSPTRRLNN). Residues 365–374 (LSPASHLASS) show a composition bias toward low complexity. Residues serine 366, serine 375, and serine 392 each carry the phosphoserine modification. The span at 381-399 (PSGLPSGLPSGSPSRSRLS) shows a compositional bias: low complexity. An omega-N-methylarginine mark is found at arginine 397 and arginine 404. Phosphoserine is present on residues serine 411, serine 430, and serine 432. The span at 437-448 (LERRDVKPDEDL) shows a compositional bias: basic and acidic residues. Phosphotyrosine is present on tyrosine 464. A disordered region spans residues 538–710 (PSSPQKLADV…ASSTPAGQPT (173 aa)). Pro residues predominate over residues 552-563 (GGPPPPHSPYSG). 3 positions are modified to phosphoserine: serine 559, serine 562, and serine 566. At arginine 567 the chain carries Omega-N-methylarginine. 5 positions are modified to phosphoserine: serine 569, serine 579, serine 581, serine 583, and serine 588. The segment covering 590 to 607 (GGKARSTGSASTAGAPPS) has biased composition (low complexity). A compositionally biased stretch (basic and acidic residues) spans 628-640 (KDTETRERMEAME). Phosphoserine occurs at positions 664 and 688. Phosphothreonine is present on residues threonine 691 and threonine 704. Residues 701 to 710 (ASSTPAGQPT) show a composition bias toward low complexity. Coiled-coil stretches lie at residues 712–753 (VSRL…RALL) and 793–813 (EELI…IQRD). The interaction with SNAP25 stretch occupies residues 714–764 (RLQMQLHLRGLQNSASDLRGQLQQLRNVQLQNQESVRALLKPTEADVSMRV). Serine 911 and serine 933 each carry phosphoserine. Disordered regions lie at residues 924-982 (GLDF…ERDW) and 1016-1094 (DCAS…TGEV). Position 951 is a phosphothreonine (threonine 951). The residue at position 1054 (serine 1054) is a Phosphoserine. Residues 1069–1078 (KSPPPPPPRR) are compositionally biased toward pro residues. Residues serine 1110 and serine 1127 each carry the phosphoserine modification. The interval 1155-1250 (ELESGGSSVP…FGARNSSISF (96 aa)) is disordered. The segment covering 1217 to 1250 (PNETSSPGSEKPSGSRTSIPVLTSFGARNSSISF) has biased composition (polar residues).

The protein belongs to the SRCIN1 family. Interacts with the N-terminal coiled-coil region of SNAP25. Interacts with BCAR1/p130Cas and SRC through its C-terminal domain. Interacts with CSK, CTTN, SORBS3/vinexin, SYP and MAPRE3/EB3. Post-translationally, tyrosine-phosphorylated in response to EGF and to cell adhesion to integrin ligands. As to expression, expressed predominantly in central nervous system with high levels detected in cortex, cerebellum, midbrain and spinal cord (at protein level). Also expressed in testis and epithelial-rich tissues such as mammary gland, lung and kidney.

The protein localises to the cytoplasm. The protein resides in the cytoskeleton. It localises to the cell projection. It is found in the axon. Its subcellular location is the dendrite. The protein localises to the presynapse. The protein resides in the postsynapse. It localises to the postsynaptic density. Acts as a negative regulator of SRC by activating CSK which inhibits SRC activity and downstream signaling, leading to impaired cell spreading and migration. Regulates dendritic spine morphology. Involved in calcium-dependent exocytosis. May play a role in neurotransmitter release or synapse maintenance. The polypeptide is SRC kinase signaling inhibitor 1 (Srcin1) (Mus musculus (Mouse)).